A 459-amino-acid chain; its full sequence is Replication initiator protein (459 aa).

Functionally, essential for pSAM2 replication. This Streptomyces ambofaciens protein is Replication initiator protein (repSA).